Reading from the N-terminus, the 126-residue chain is 5-hydroxyisourate hydrolase (126 aa).

Positions 16, 54, and 123 each coordinate substrate.

Belongs to the transthyretin family. 5-hydroxyisourate hydrolase subfamily. In terms of assembly, homotetramer.

It catalyses the reaction 5-hydroxyisourate + H2O = 5-hydroxy-2-oxo-4-ureido-2,5-dihydro-1H-imidazole-5-carboxylate + H(+). Catalyzes the hydrolysis of 5-hydroxyisourate (HIU) to 2-oxo-4-hydroxy-4-carboxy-5-ureidoimidazoline (OHCU). This Pseudomonas aeruginosa (strain ATCC 15692 / DSM 22644 / CIP 104116 / JCM 14847 / LMG 12228 / 1C / PRS 101 / PAO1) protein is 5-hydroxyisourate hydrolase.